The following is a 1177-amino-acid chain: DNA-directed RNA polymerase subunit beta' (1177 aa).

Zn(2+)-binding residues include Cys-60, Cys-62, Cys-75, and Cys-78. 3 residues coordinate Mg(2+): Asp-450, Asp-452, and Asp-454. Zn(2+) contacts are provided by Cys-795, Cys-869, Cys-876, and Cys-879.

It belongs to the RNA polymerase beta' chain family. In terms of assembly, the RNAP catalytic core consists of 2 alpha, 1 beta, 1 beta' and 1 omega subunit. When a sigma factor is associated with the core the holoenzyme is formed, which can initiate transcription. The cofactor is Mg(2+). It depends on Zn(2+) as a cofactor.

It carries out the reaction RNA(n) + a ribonucleoside 5'-triphosphate = RNA(n+1) + diphosphate. Functionally, DNA-dependent RNA polymerase catalyzes the transcription of DNA into RNA using the four ribonucleoside triphosphates as substrates. The protein is DNA-directed RNA polymerase subunit beta' of Clostridium botulinum (strain Eklund 17B / Type B).